The primary structure comprises 140 residues: L-fucose mutarotase (140 aa).

The Proton donor role is filled by His-22. Substrate is bound by residues Asp-30, Arg-107, and 129-131 (YGN).

It belongs to the RbsD / FucU family. FucU mutarotase subfamily. As to quaternary structure, homodecamer.

It is found in the cytoplasm. The catalysed reaction is alpha-L-fucose = beta-L-fucose. The protein operates within carbohydrate metabolism; L-fucose metabolism. In terms of biological role, involved in the anomeric conversion of L-fucose. The sequence is that of L-fucose mutarotase from Klebsiella pneumoniae (strain 342).